The following is a 327-amino-acid chain: tRNA pseudouridine synthase B (327 aa).

Aspartate 69 acts as the Nucleophile in catalysis. Positions 97, 201, and 222 each coordinate substrate.

It belongs to the pseudouridine synthase TruB family. Type 1 subfamily.

The catalysed reaction is uridine(55) in tRNA = pseudouridine(55) in tRNA. Functionally, responsible for synthesis of pseudouridine from uracil-55 in the psi GC loop of transfer RNAs. The polypeptide is tRNA pseudouridine synthase B (Wigglesworthia glossinidia brevipalpis).